Reading from the N-terminus, the 249-residue chain is uncharacterized protein (249 aa).

Residues 30–65 (KVDKLKKLEIKKLEDQKKLKEQEEKHRLTLIRLANA) are a coiled coil. The segment at 66–97 (PPQTNSINNNNNNNNNIKTNRPPLIYGEDKDK) is disordered.

This is an uncharacterized protein from Dictyostelium discoideum (Social amoeba).